The sequence spans 132 residues: Small ribosomal subunit protein uS8 (132 aa).

This sequence belongs to the universal ribosomal protein uS8 family. Part of the 30S ribosomal subunit. Contacts proteins S5 and S12.

Functionally, one of the primary rRNA binding proteins, it binds directly to 16S rRNA central domain where it helps coordinate assembly of the platform of the 30S subunit. This chain is Small ribosomal subunit protein uS8, found in Anaplasma marginale (strain Florida).